The primary structure comprises 291 residues: Oxidative stress-responsive serine-rich protein 1 (291 aa).

The segment at 44-139 (RTTVDDTKPK…STGENSTSLD (96 aa)) is disordered. Basic residues predominate over residues 65-83 (STRKSSRGAVRIQRRRRSK). Polar residues-rich tracts occupy residues 95–113 (CSTT…SQTE) and 127–139 (KEFS…TSLD). Position 143 is a phosphothreonine (threonine 143).

In terms of tissue distribution, ubiquitous with high level in testis, placenta and cardiac myocytes. As to expression, expressed in testis, unpreganant uterus and cardiac myocytes.

This is Oxidative stress-responsive serine-rich protein 1 (Oser1) from Rattus norvegicus (Rat).